A 217-amino-acid polypeptide reads, in one-letter code: Snake venom metalloproteinase lebetase-4 (217 aa).

Residues 1 to 14 (SCRKKASQLNLTPE) constitute a propeptide that is removed on maturation. Gln15 bears the Pyrrolidone carboxylic acid mark. Residues 21-217 (RYIELVIVAD…HNPQCILNQP (197 aa)) enclose the Peptidase M12B domain. The Ca(2+) site is built by Glu24 and Asp108. Disulfide bonds link Cys132/Cys212, Cys172/Cys196, and Cys174/Cys179. Position 157 (His157) interacts with Zn(2+). Glu158 is an active-site residue. 2 residues coordinate Zn(2+): His161 and His167. Ca(2+) contacts are provided by Cys212 and Asn215.

This sequence belongs to the venom metalloproteinase (M12B) family. P-I subfamily. As to quaternary structure, monomer. Requires Zn(2+) as cofactor. As to expression, expressed by the venom gland.

The protein resides in the secreted. Its activity is regulated as follows. Fibrinolytic and caseinolytic activities are inhibited by Cd(2+), Cu(2+) and Co(2+) ions. Not inhibited by Mg(2+), Ca(2+) and Ba(2+). Also inhibited by EDTA, EGTA and 1,10-phenanthroline. In terms of biological role, snake venom zinc metalloprotease that hydrolyzes the Aalpha-chain and more slowly the Bbeta-chain of fibrin and fibrinogen. Also hydrolyzes casein and B-chain of oxidized insulin. Its fibrinolytic activity is direct, without any plasminogen activation. Inhibits ADP-induced and collagen-induced platelet aggregation. Shows low hemorrhagic activity. Cleaves the plasma proteinase inhibitors alpha(2)-macroglobulin (A2M) and alpha(2)M-related pregnancy zone protein (PZP), and is inhibited by them. The polypeptide is Snake venom metalloproteinase lebetase-4 (Macrovipera lebetinus (Levantine viper)).